Reading from the N-terminus, the 218-residue chain is LOB domain-containing protein 29 (218 aa).

Positions 10-112 (SPCGACKFLR…AELEILKQQA (103 aa)) constitute an LOB domain.

It belongs to the LOB domain-containing protein family. Expressed in roots.

Involved in lateral root formation. Regulated by the transcriptional activators ARF7 and ARF19. The sequence is that of LOB domain-containing protein 29 (LBD29) from Arabidopsis thaliana (Mouse-ear cress).